A 306-amino-acid chain; its full sequence is Leucine-rich repeat-containing protein 75B (306 aa).

The tract at residues 1-22 is disordered; it reads MGARLGRRARADAPAAPSAGPA. The segment covering 12 to 22 has biased composition (low complexity); it reads DAPAAPSAGPA. LRR repeat units follow at residues 173 to 186 and 198 to 211; these read LVVL…LSDE and LPRL…GNRL.

Belongs to the LRRC75 family.

Its function is as follows. May suppress myogenic differentiation by modulating MYOG expression and Erk1/2 signaling. This chain is Leucine-rich repeat-containing protein 75B, found in Mus musculus (Mouse).